A 95-amino-acid polypeptide reads, in one-letter code: Pyruvate dehydrogenase inhibitor (95 aa).

Belongs to the HesB/IscA family. As to quaternary structure, interacts with the E1 module of pyruvate dehydrogenase (PdhA-PdhB).

Its function is as follows. Acts as an inhibitor of the pyruvate dehydrogenase. Overexpression does not affect growth with glucose as the main carbon source, but it leads to a dramatic growth defect when cells are grown with pyruvate as the sole carbon source. This is Pyruvate dehydrogenase inhibitor from Bacillus subtilis (strain 168).